A 208-amino-acid polypeptide reads, in one-letter code: MEAPPVTMMPVTGGTINMMEYLLQGSVLDHSLESLIHRLRGLCDNMEPETFLDHEMVFLLKGQQASPFVLRARRSMDRAGAPWHLRYLGQPEMGDKNRHALVRNCVDIATSENLTDFLMEMGFRMDHEFVAKGHLFRKGIMKIMVYKIFRILVPGNTDSTEALSLSYLVELSVVAPAGQDMVSDDMKNFAEQLKPLVHLEKIDPKRLM.

Ser-66 is subject to Phosphoserine.

The protein belongs to the Mediator complex subunit 18 family. As to quaternary structure, component of the Mediator complex, which is composed of MED1, MED4, MED6, MED7, MED8, MED9, MED10, MED11, MED12, MED13, MED13L, MED14, MED15, MED16, MED17, MED18, MED19, MED20, MED21, MED22, MED23, MED24, MED25, MED26, MED27, MED29, MED30, MED31, CCNC, CDK8 and CDC2L6/CDK11. The MED12, MED13, CCNC and CDK8 subunits form a distinct module termed the CDK8 module. Mediator containing the CDK8 module is less active than Mediator lacking this module in supporting transcriptional activation. Individual preparations of the Mediator complex lacking one or more distinct subunits have been variously termed ARC, CRSP, DRIP, PC2, SMCC and TRAP.

It localises to the nucleus. Component of the Mediator complex, a coactivator involved in the regulated transcription of nearly all RNA polymerase II-dependent genes. Mediator functions as a bridge to convey information from gene-specific regulatory proteins to the basal RNA polymerase II transcription machinery. Mediator is recruited to promoters by direct interactions with regulatory proteins and serves as a scaffold for the assembly of a functional preinitiation complex with RNA polymerase II and the general transcription factors. The polypeptide is Mediator of RNA polymerase II transcription subunit 18 (MED18) (Homo sapiens (Human)).